The following is a 668-amino-acid chain: Type II methyltransferase M.MwoI (668 aa).

This sequence belongs to the N(4)/N(6)-methyltransferase family. N(4) subfamily.

It carries out the reaction a 2'-deoxycytidine in DNA + S-adenosyl-L-methionine = an N(4)-methyl-2'-deoxycytidine in DNA + S-adenosyl-L-homocysteine + H(+). Its function is as follows. A beta subtype methylase, recognizes the double-stranded DNA sequence 5'-GCNNNNNNNGC-3', methylates C-2 on both strands, and protects the DNA from cleavage by the MwoI endonuclease. In Methanothermobacter wolfeii (Methanobacterium wolfei), this protein is Type II methyltransferase M.MwoI.